A 246-amino-acid chain; its full sequence is MATAGEESQTQAGRHQEVGHKSLLQSDALYQHILETSVYPREPEPMKELREITAKHPWNIMTTSADEGQFLNMLLKLINAKNTMEIGVFTGYSLLATALALPDDGKILAMDINRENYELGLPVIQKAGVADKIDFREGPALPILDQLIEDGKQGSFDFIFVDADKDNYLNYHKRLIELVKVGGLIGYDNTLWNGSVVAPPDAPLRKYVRYYRDFVLELNKALAADPRIEICMLPVGDGITLCRRIS.

A substrate-binding site is contributed by Lys21. S-adenosyl-L-methionine-binding positions include Thr63, Glu85, Gly87 to Val88, Ser93, Asp111, and Ala140. Asp162 is a binding site for substrate. A divalent metal cation is bound at residue Asp162. Position 164 (Asp164) interacts with S-adenosyl-L-methionine. The a divalent metal cation site is built by Asp188 and Asn189. Asn193 contacts substrate.

Belongs to the class I-like SAM-binding methyltransferase superfamily. Cation-dependent O-methyltransferase family. CCoAMT subfamily. It depends on a divalent metal cation as a cofactor.

The enzyme catalyses (E)-caffeoyl-CoA + S-adenosyl-L-methionine = (E)-feruloyl-CoA + S-adenosyl-L-homocysteine + H(+). It functions in the pathway aromatic compound metabolism; phenylpropanoid biosynthesis. Functionally, methylates caffeoyl-CoA to feruloyl-CoA and 5-hydroxyferuloyl-CoA to sinapoyl-CoA. Plays a role in the synthesis of feruloylated polysaccharides. Involved in the reinforcement of the plant cell wall. Also involved in the responding to wounding or pathogen challenge by the increased formation of cell wall-bound ferulic acid polymers. The protein is Caffeoyl-CoA O-methyltransferase 1 (CCOMT) of Eucalyptus globulus (Tasmanian blue gum).